Consider the following 225-residue polypeptide: 2-C-methyl-D-erythritol 4-phosphate cytidylyltransferase (225 aa).

This sequence belongs to the IspD/TarI cytidylyltransferase family. IspD subfamily.

It catalyses the reaction 2-C-methyl-D-erythritol 4-phosphate + CTP + H(+) = 4-CDP-2-C-methyl-D-erythritol + diphosphate. The protein operates within isoprenoid biosynthesis; isopentenyl diphosphate biosynthesis via DXP pathway; isopentenyl diphosphate from 1-deoxy-D-xylulose 5-phosphate: step 2/6. Catalyzes the formation of 4-diphosphocytidyl-2-C-methyl-D-erythritol from CTP and 2-C-methyl-D-erythritol 4-phosphate (MEP). This Haemophilus influenzae (strain 86-028NP) protein is 2-C-methyl-D-erythritol 4-phosphate cytidylyltransferase.